Consider the following 461-residue polypeptide: Fumarate hydratase class II (461 aa).

Residues 97 to 99 (SGT), 127 to 130 (HPND), 137 to 139 (SSN), and threonine 185 each bind substrate. The active-site Proton donor/acceptor is histidine 186. Serine 316 is an active-site residue. Substrate-binding positions include serine 317 and 322 to 324 (KVN).

This sequence belongs to the class-II fumarase/aspartase family. Fumarase subfamily. As to quaternary structure, homotetramer.

It is found in the cytoplasm. The enzyme catalyses (S)-malate = fumarate + H2O. It participates in carbohydrate metabolism; tricarboxylic acid cycle; (S)-malate from fumarate: step 1/1. In terms of biological role, involved in the TCA cycle. Catalyzes the stereospecific interconversion of fumarate to L-malate. The protein is Fumarate hydratase class II of Staphylococcus aureus (strain MRSA252).